The chain runs to 776 residues: Conserved oligomeric Golgi complex subunit 4 (776 aa).

S342 and S345 each carry phosphoserine.

Belongs to the COG4 family. In terms of assembly, component of the conserved oligomeric Golgi complex which is composed of eight different subunits and is required for normal Golgi morphology and localization.

Its subcellular location is the golgi apparatus membrane. In terms of biological role, required for normal Golgi function. The protein is Conserved oligomeric Golgi complex subunit 4 of Drosophila melanogaster (Fruit fly).